The chain runs to 330 residues: PDZ and LIM domain protein 4 (330 aa).

In terms of domain architecture, PDZ spans 1–84 (MTHSVTLRGP…HLTLSVSRPE (84 aa)). 2 disordered regions span residues 104–153 (DPES…SNEA) and 219–242 (EAGEGGDRPGSGGPRNLKPAASKL). Residues serine 107, serine 111, serine 115, serine 118, serine 119, serine 124, and serine 134 each carry the phosphoserine modification. The span at 108-122 (QDCSPATSRRSSVSG) shows a compositional bias: polar residues. One can recognise an LIM zinc-binding domain in the interval 255 to 305 (CTRCGHGIVGTIVKARDKLYHPECFMCSDCGLNLKQRGYFFLDERLYCENH).

Homodimer. Interacts (via C-terminus only or via combined C-terminus and LIM domain, but not LIM domain only) with PTPN13 (via the second or fourth PDZ domains). Found in a complex with PTPN13 and TRIP6. Interacts (via PDZ domain) with ACTN1 and ACTN2 (via C-terminal SDL residues). Interacts (via PDZ domain) with TRIP6 (via the second LIM domain or via the third LIM domain plus C-terminus). Interacts (via LIM domain) with GRIA1 (via C-terminus); this interaction as well as the interaction with alpha-actinin is required for their colocalization in early endosomes. Interacts with PDLIM1. Forms (via LIM domain) a heterodimer with PDLIM3. Interacts directly with SRC (via kinase domain and to a lesser extent the SH2 domain). Post-translationally, phosphorylated on tyrosine residue(s). Can be dephosphorylated by PTPN13. Expressed in several non-muscle tissues including lung, brain, ovary and uterus, and especially in epithelial cells at 14 dpc. In the uterus, high expression in the glandular epithelium, but absent in the simple columnar epithelium lining the uterus cavity.

The protein resides in the cytoplasm. It is found in the cytoskeleton. The protein localises to the cell projection. Its subcellular location is the dendritic spine. It localises to the early endosome membrane. The protein resides in the recycling endosome membrane. It is found in the nucleus. The protein localises to the perinuclear region. Its subcellular location is the lamellipodium. It localises to the synapse. The protein resides in the synaptosome. Its function is as follows. Suppresses SRC activation by recognizing and binding to active SRC and facilitating PTPN13-mediated dephosphorylation of SRC 'Tyr-419' leading to its inactivation. Inactivated SRC dissociates from this protein allowing the initiation of a new SRC inactivation cycle. Involved in reorganization of the actin cytoskeleton. In nonmuscle cells, binds to ACTN1 (alpha-actinin-1), increases the affinity of ACTN1 to F-actin (filamentous actin), and promotes formation of actin stress fibers. Involved in regulation of the synaptic AMPA receptor transport in dendritic spines of hippocampal pyramidal neurons directing the receptors toward an insertion at the postsynaptic membrane. Links endosomal surface-internalized GRIA1-containing AMPA receptors to the alpha-actinin/actin cytoskeleton. Increases AMPA receptor-mediated excitatory postsynaptic currents in neurons. The protein is PDZ and LIM domain protein 4 (Pdlim4) of Mus musculus (Mouse).